A 239-amino-acid chain; its full sequence is Immunoglobulin superfamily member 23 (239 aa).

The interval 63-93 (ELEAQPPTSSSPKGLPGRPRTSQEVPNAEDN) is disordered. The Ig-like domain occupies 94–179 (PSLIPLVTFP…ELVSEPVTVS (86 aa)). The helical transmembrane segment at 214–234 (LIVAATIGGLVLIGSVCFYIL) threads the bilayer.

The protein localises to the cell membrane. Its function is as follows. May be involved in osteoclast differentiation. This is Immunoglobulin superfamily member 23 from Mus musculus (Mouse).